Consider the following 225-residue polypeptide: U2 small nuclear ribonucleoprotein B'' (225 aa).

Residues 7–86 enclose the RRM 1 domain; sequence HTIYINNMND…KPMRIQYAKT (80 aa). Residues 100-144 are disordered; sequence DKEKKKEKKKAKTMEQAAAAANKKPGQGTPNAANTQGTAAPNPQV. Lys111 carries the N6-acetyllysine; alternate modification. Residue Lys111 forms a Glycyl lysine isopeptide (Lys-Gly) (interchain with G-Cter in SUMO2); alternate linkage. Over residues 113-123 the composition is skewed to low complexity; it reads MEQAAAAANKK. Residues 127 to 140 are compositionally biased toward polar residues; that stretch reads GTPNAANTQGTAAP. A Phosphotyrosine modification is found at Tyr151. Residues 151–225 form the RRM 2 domain; sequence YILFLNNLPE…HAMKITYAKK (75 aa).

Belongs to the RRM U1 A/B'' family. In terms of assembly, identified in the spliceosome B complex. Identified in the spliceosome C complex. Present in a spliceosome complex assembled in vitro, and composed of SNRPB2, HPRP8BP and CRNKL1. Contributes to the binding of stem loop IV of U2 snRNA with SNRPP1.

It localises to the nucleus. Functionally, involved in pre-mRNA splicing as component of the spliceosome. Associated with sn-RNP U2, where it contributes to the binding of stem loop IV of U2 snRNA. The polypeptide is U2 small nuclear ribonucleoprotein B'' (Snrpb2) (Mus musculus (Mouse)).